A 310-amino-acid polypeptide reads, in one-letter code: Ribosomal RNA small subunit methyltransferase H (310 aa).

S-adenosyl-L-methionine contacts are provided by residues 33 to 35 (AGH), aspartate 53, phenylalanine 79, aspartate 100, and glutamine 107.

Belongs to the methyltransferase superfamily. RsmH family.

The protein localises to the cytoplasm. It catalyses the reaction cytidine(1402) in 16S rRNA + S-adenosyl-L-methionine = N(4)-methylcytidine(1402) in 16S rRNA + S-adenosyl-L-homocysteine + H(+). Its function is as follows. Specifically methylates the N4 position of cytidine in position 1402 (C1402) of 16S rRNA. The sequence is that of Ribosomal RNA small subunit methyltransferase H from Clostridium botulinum (strain Alaska E43 / Type E3).